The primary structure comprises 239 residues: Cyclo(L-leucyl-L-phenylalanyl) synthase (239 aa).

Serine 37 (nucleophile) is an active-site residue. Substrate is bound by residues asparagine 40, 178–182 (YVLAE), and tyrosine 202.

It belongs to the CDPS family. As to quaternary structure, monomer.

It catalyses the reaction L-phenylalanyl-tRNA(Phe) + L-leucyl-tRNA(Leu) = cyclo(L-phenylalanyl-L-leucyl) + tRNA(Phe) + tRNA(Leu) + H(+). Involved in the biosynthesis of albonoursin (cyclo[(alpha,beta-dehydro-Phe)-(alpha,beta-dehydro-Leu)]), an antibacterial peptide. It uses activated amino acids in the form of aminoacyl-tRNAs (aa-tRNAs) as substrates to catalyze the ATP-independent formation of cyclodipeptides which are intermediates in diketopiperazine (DKP) biosynthetic pathways. Catalyzes the formation of cyclo(L-Phe-L-Leu) (cFL) as major products from L-L-phenylalanyl-tRNA(Phe) and L-leucyl-tRNA(Leu). AlbC can also incorporate various nonpolar residues, such as L-phenylalanine, L-leucine, L-tyrosine and L-methionine, and to a much lesser extent L-alanine and L-valine, into cyclodipeptides. Indeed, ten possible cyclodipeptides composed of L-phenylalanine, L-leucine, L-tyrosine and L-methionine are all synthesized to detectable amounts by AlbC. This chain is Cyclo(L-leucyl-L-phenylalanyl) synthase (albC), found in Streptomyces noursei (Streptomyces albulus).